A 457-amino-acid polypeptide reads, in one-letter code: Bifunctional protein GlmU (457 aa).

Positions Met-1–Arg-230 are pyrophosphorylase. UDP-N-acetyl-alpha-D-glucosamine is bound by residues Leu-9–Gly-12, Lys-23, Gln-73, and Gly-78–Thr-79. Asp-103 lines the Mg(2+) pocket. Positions 140, 155, 170, and 228 each coordinate UDP-N-acetyl-alpha-D-glucosamine. A Mg(2+)-binding site is contributed by Asn-228. The interval Ile-231–Asn-251 is linker. The interval Gly-252 to Lys-457 is N-acetyltransferase. UDP-N-acetyl-alpha-D-glucosamine is bound by residues Arg-333 and Lys-351. His-363 (proton acceptor) is an active-site residue. Residues Tyr-366 and Asn-377 each coordinate UDP-N-acetyl-alpha-D-glucosamine. Acetyl-CoA is bound by residues Asn-386–Tyr-387, Ala-423, and Arg-440.

In the N-terminal section; belongs to the N-acetylglucosamine-1-phosphate uridyltransferase family. The protein in the C-terminal section; belongs to the transferase hexapeptide repeat family. In terms of assembly, homotrimer. Requires Mg(2+) as cofactor.

The protein resides in the cytoplasm. The catalysed reaction is alpha-D-glucosamine 1-phosphate + acetyl-CoA = N-acetyl-alpha-D-glucosamine 1-phosphate + CoA + H(+). It catalyses the reaction N-acetyl-alpha-D-glucosamine 1-phosphate + UTP + H(+) = UDP-N-acetyl-alpha-D-glucosamine + diphosphate. It functions in the pathway nucleotide-sugar biosynthesis; UDP-N-acetyl-alpha-D-glucosamine biosynthesis; N-acetyl-alpha-D-glucosamine 1-phosphate from alpha-D-glucosamine 6-phosphate (route II): step 2/2. It participates in nucleotide-sugar biosynthesis; UDP-N-acetyl-alpha-D-glucosamine biosynthesis; UDP-N-acetyl-alpha-D-glucosamine from N-acetyl-alpha-D-glucosamine 1-phosphate: step 1/1. Its pathway is bacterial outer membrane biogenesis; LPS lipid A biosynthesis. Functionally, catalyzes the last two sequential reactions in the de novo biosynthetic pathway for UDP-N-acetylglucosamine (UDP-GlcNAc). The C-terminal domain catalyzes the transfer of acetyl group from acetyl coenzyme A to glucosamine-1-phosphate (GlcN-1-P) to produce N-acetylglucosamine-1-phosphate (GlcNAc-1-P), which is converted into UDP-GlcNAc by the transfer of uridine 5-monophosphate (from uridine 5-triphosphate), a reaction catalyzed by the N-terminal domain. This chain is Bifunctional protein GlmU, found in Listeria monocytogenes serovar 1/2a (strain ATCC BAA-679 / EGD-e).